The chain runs to 656 residues: UvrABC system protein B (656 aa).

In terms of domain architecture, Helicase ATP-binding spans 23-180 (EGIKKGYRFQ…QHLAKIGYER (158 aa)). Position 36-43 (36-43 (GVTGSGKT)) interacts with ATP. A Beta-hairpin motif is present at residues 89–112 (YYDYYQPEAYVPTKDLYIEKNADI). In terms of domain architecture, Helicase C-terminal spans 426–588 (QVDDLISEIK…ITPKTIVKPL (163 aa)). The 36-residue stretch at 614-649 (EEYLSLLEEEMYRAASELRYEDAAKLRDEIFRLREE) folds into the UVR domain.

Belongs to the UvrB family. As to quaternary structure, forms a heterotetramer with UvrA during the search for lesions. Interacts with UvrC in an incision complex.

The protein localises to the cytoplasm. Its function is as follows. The UvrABC repair system catalyzes the recognition and processing of DNA lesions. A damage recognition complex composed of 2 UvrA and 2 UvrB subunits scans DNA for abnormalities. Upon binding of the UvrA(2)B(2) complex to a putative damaged site, the DNA wraps around one UvrB monomer. DNA wrap is dependent on ATP binding by UvrB and probably causes local melting of the DNA helix, facilitating insertion of UvrB beta-hairpin between the DNA strands. Then UvrB probes one DNA strand for the presence of a lesion. If a lesion is found the UvrA subunits dissociate and the UvrB-DNA preincision complex is formed. This complex is subsequently bound by UvrC and the second UvrB is released. If no lesion is found, the DNA wraps around the other UvrB subunit that will check the other stand for damage. This chain is UvrABC system protein B, found in Pseudothermotoga lettingae (strain ATCC BAA-301 / DSM 14385 / NBRC 107922 / TMO) (Thermotoga lettingae).